We begin with the raw amino-acid sequence, 323 residues long: Acetyl-coenzyme A carboxylase carboxyl transferase subunit alpha (323 aa).

The CoA carboxyltransferase C-terminal domain occupies leucine 40–threonine 293.

Belongs to the AccA family. In terms of assembly, acetyl-CoA carboxylase is a heterohexamer composed of biotin carboxyl carrier protein (AccB), biotin carboxylase (AccC) and two subunits each of ACCase subunit alpha (AccA) and ACCase subunit beta (AccD).

Its subcellular location is the cytoplasm. It carries out the reaction N(6)-carboxybiotinyl-L-lysyl-[protein] + acetyl-CoA = N(6)-biotinyl-L-lysyl-[protein] + malonyl-CoA. The protein operates within lipid metabolism; malonyl-CoA biosynthesis; malonyl-CoA from acetyl-CoA: step 1/1. Component of the acetyl coenzyme A carboxylase (ACC) complex. First, biotin carboxylase catalyzes the carboxylation of biotin on its carrier protein (BCCP) and then the CO(2) group is transferred by the carboxyltransferase to acetyl-CoA to form malonyl-CoA. The protein is Acetyl-coenzyme A carboxylase carboxyl transferase subunit alpha of Polynucleobacter necessarius subsp. necessarius (strain STIR1).